The primary structure comprises 605 residues: Leucine-rich repeat-containing protein 40 (605 aa).

Positions Met-1 to Ala-26 are disordered. LRR repeat units lie at residues Asp-83 to Leu-104, Ala-106 to Leu-127, Asn-129 to Gln-151, Asn-152 to Leu-173, Ile-175 to Leu-196, Gly-198 to Met-219, Asn-221 to Met-242, Ser-244 to Thr-265, Lys-266 to Asn-287, Ser-290 to Leu-311, Gly-313 to Pro-335, Asn-336 to Lys-357, Phe-429 to Met-450, Ser-453 to Leu-475, Lys-476 to Met-497, Arg-499 to Ile-520, Thr-522 to Lys-543, Lys-546 to Cys-567, and Ser-569 to Lys-590.

The chain is Leucine-rich repeat-containing protein 40 (lrrc40) from Xenopus tropicalis (Western clawed frog).